A 454-amino-acid polypeptide reads, in one-letter code: Gustatory and odorant receptor 21a (454 aa).

Residues 1–114 (MTFLDRTMSF…LPRTGYSWGS (114 aa)) are Cytoplasmic-facing. A helical transmembrane segment spans residues 115 to 135 (KQVMWAIFIYSCQTTIVVLVL). Residues 136–153 (RERVKKFVTSPDKRFDEA) are Extracellular-facing. Residues 154–174 (IYNVIFISLLFTNFLLPVASW) traverse the membrane as a helical segment. Residues 175-206 (RHGPQVAIFKNMWTNYQYKFFKTTGSPIVFPN) lie on the Cytoplasmic side of the membrane. The chain crosses the membrane as a helical span at residues 207-227 (LYPLTWSLCVFSWLLSIAINL). Residues 228-237 (SQYFLQPDFR) lie on the Extracellular side of the membrane. The chain crosses the membrane as a helical span at residues 238–258 (LWYTFAYYPIIAMLNCFCSLW). The Cytoplasmic segment spans residues 259–312 (YINCNAFGTASRALSDALQTTIRGEKPAQKLTEYRHLWVDLSHMMQQLGRAYSN). Residues 313–333 (MYGMYCLVIFFTTIIATYGSI) traverse the membrane as a helical segment. Topologically, residues 334-345 (SEIIDHGATYKE) are extracellular. Residues 346-366 (VGLFVIVFYCMGLLYIICNEA) traverse the membrane as a helical segment. At 367–422 (HYASRKVGLDFQTKLLNINLTAVDAATQKEVEMLLVAINKNPPIMNLDGYANINRE) the chain is on the cytoplasmic side. The helical transmembrane segment at 423-443 (LITTNISFMATYLVVLLQFKI) threads the bilayer. Residues 444–454 (TEQRRIGQQQA) lie on the Extracellular side of the membrane.

The protein belongs to the insect chemoreceptor superfamily. Gustatory receptor (GR) family. Gr21a subfamily. As to quaternary structure, gr21a and Gr63a probably form a heterodimer that responds to CO(2). As to expression, expressed in the adult labellar chemosensory neurons. Carbon dioxide-responsive neurons coexpress Gr21a and Gr63a in a pair of chemosensory receptors at both larval and adult life stages. A single bilateral neuron, expressing the Gr21a receptor, is responsible for CO(2) detection in larvae.

The protein localises to the cell membrane. Its function is as follows. Gustatory and odorant receptor which mediates acceptance or avoidance behavior, depending on its substrates. Gr21a and Gr63a together are sufficient for carbon dioxide detection and avoidance behavior. It is possible that the CO(2) receptors Gr63a and Gr21a activate the TRPC channels through Galpha49B and Plc21C. This innate olfactory avoidance behavior can be inhibited by inhibitory interactions of the odors such as 1-hexanol and 2,3-butanedione with Gr21a and Gr63a. This Drosophila melanogaster (Fruit fly) protein is Gustatory and odorant receptor 21a (Gr21a).